We begin with the raw amino-acid sequence, 363 residues long: uncharacterized protein (363 aa).

This is an uncharacterized protein from Methanocaldococcus jannaschii (strain ATCC 43067 / DSM 2661 / JAL-1 / JCM 10045 / NBRC 100440) (Methanococcus jannaschii).